A 100-amino-acid chain; its full sequence is NADH-quinone oxidoreductase subunit K (100 aa).

The next 3 helical transmembrane spans lie at 4–24, 29–49, and 60–80; these read LSNY…GVLT, IVVF…FVAF, and IFVF…LALF.

This sequence belongs to the complex I subunit 4L family. NDH-1 is composed of 14 different subunits. Subunits NuoA, H, J, K, L, M, N constitute the membrane sector of the complex.

It localises to the cell inner membrane. The catalysed reaction is a quinone + NADH + 5 H(+)(in) = a quinol + NAD(+) + 4 H(+)(out). Functionally, NDH-1 shuttles electrons from NADH, via FMN and iron-sulfur (Fe-S) centers, to quinones in the respiratory chain. The immediate electron acceptor for the enzyme in this species is believed to be ubiquinone. Couples the redox reaction to proton translocation (for every two electrons transferred, four hydrogen ions are translocated across the cytoplasmic membrane), and thus conserves the redox energy in a proton gradient. The sequence is that of NADH-quinone oxidoreductase subunit K from Trichlorobacter lovleyi (strain ATCC BAA-1151 / DSM 17278 / SZ) (Geobacter lovleyi).